The following is a 490-amino-acid chain: Probable cytosol aminopeptidase (490 aa).

Mn(2+)-binding residues include K257 and D262. Residue K269 is part of the active site. Mn(2+)-binding residues include D281, D341, and E343. R345 is a catalytic residue.

This sequence belongs to the peptidase M17 family. The cofactor is Mn(2+).

The protein localises to the cytoplasm. The enzyme catalyses Release of an N-terminal amino acid, Xaa-|-Yaa-, in which Xaa is preferably Leu, but may be other amino acids including Pro although not Arg or Lys, and Yaa may be Pro. Amino acid amides and methyl esters are also readily hydrolyzed, but rates on arylamides are exceedingly low.. It catalyses the reaction Release of an N-terminal amino acid, preferentially leucine, but not glutamic or aspartic acids.. Its function is as follows. Presumably involved in the processing and regular turnover of intracellular proteins. Catalyzes the removal of unsubstituted N-terminal amino acids from various peptides. The polypeptide is Probable cytosol aminopeptidase (Prochlorococcus marinus (strain MIT 9312)).